Here is a 225-residue protein sequence, read N- to C-terminus: Ribose-5-phosphate isomerase A (225 aa).

Residues 26-29 (TGST), 82-85 (DGAD), and 95-98 (KGGG) each bind substrate. E104 (proton acceptor) is an active-site residue. K122 contacts substrate.

Belongs to the ribose 5-phosphate isomerase family. Homodimer.

The catalysed reaction is aldehydo-D-ribose 5-phosphate = D-ribulose 5-phosphate. It functions in the pathway carbohydrate degradation; pentose phosphate pathway; D-ribose 5-phosphate from D-ribulose 5-phosphate (non-oxidative stage): step 1/1. Functionally, catalyzes the reversible conversion of ribose-5-phosphate to ribulose 5-phosphate. This is Ribose-5-phosphate isomerase A from Streptococcus sanguinis (strain SK36).